Consider the following 119-residue polypeptide: Beta-2-microglobulin (119 aa).

The N-terminal stretch at 1-20 (MARSVVVALLVLLSLSGLEA) is a signal peptide. Positions 25 to 114 (PKIQVYSRHP…VTFSTPKTVK (90 aa)) constitute an Ig-like C1-type domain. Cysteines 45 and 100 form a disulfide.

This sequence belongs to the beta-2-microglobulin family. In terms of assembly, heterodimer of an alpha chain and a beta chain. Beta-2-microglobulin is the beta-chain of major histocompatibility complex class I molecules.

Its subcellular location is the secreted. In terms of biological role, component of the class I major histocompatibility complex (MHC). Involved in the presentation of peptide antigens to the immune system. The polypeptide is Beta-2-microglobulin (B2M) (Ateles paniscus (Black spider monkey)).